We begin with the raw amino-acid sequence, 162 residues long: IIVTQTMKGLDIQKVAGTWHSLAMAASDISLLDAQSAPLRVYVEELKPTPEGNLEILLQKWENGECAQKKIIAEKTKIPAVFKIDALNENKVLVLDTDYKKYLLFCMENSAEPEQSLACQCLVRTPEVDNEALEKFDKALKALPMHIRLAFNPTQLEGQCHV.

Intrachain disulfides connect Cys66-Cys160, Cys106-Cys119, and Cys106-Cys121.

Belongs to the calycin superfamily. Lipocalin family. In terms of assembly, under physiological conditions beta-lactoglobulin exists as an equilibrium mixture of monomeric and dimeric forms. In terms of processing, alternate disulfide bonds occur in equal amounts.

It localises to the secreted. Its function is as follows. Lactoglobulin is the primary component of whey, it binds retinol and is probably involved in the transport of that molecule. This is Beta-lactoglobulin (LGB) from Ovis aries musimon (Mouflon).